Reading from the N-terminus, the 293-residue chain is Large ribosomal subunit protein uL4c (293 aa).

A chloroplast-targeting transit peptide spans 1–50 (MATSTSSSLSLSFFSSSLFSSKSRNFSSKPILKLPSSSHSQTSLSLSIKS). 2 disordered regions span residues 107–138 (EVRG…PGGG) and 259–293 (YGVD…EPAE). Residues 116–126 (YPQKKTGRARR) show a composition bias toward basic residues. Residues 263–293 (TLEDEDEEEEEEEEGEEVDDGVEDGTPEPAE) are compositionally biased toward acidic residues.

Belongs to the universal ribosomal protein uL4 family. In terms of assembly, component of the chloroplast large ribosomal subunit (LSU). Mature 70S chloroplast ribosomes of higher plants consist of a small (30S) and a large (50S) subunit. The 30S small subunit contains 1 molecule of ribosomal RNA (16S rRNA) and 24 different proteins. The 50S large subunit contains 3 rRNA molecules (23S, 5S and 4.5S rRNA) and 33 different proteins. As to expression, highly expressed in cotyledon and weakly in roots.

The protein localises to the plastid. It localises to the chloroplast. Functionally, component of the chloroplast ribosome (chloro-ribosome), a dedicated translation machinery responsible for the synthesis of chloroplast genome-encoded proteins, including proteins of the transcription and translation machinery and components of the photosynthetic apparatus. This is Large ribosomal subunit protein uL4c (RPL4) from Spinacia oleracea (Spinach).